We begin with the raw amino-acid sequence, 64 residues long: Ferredoxin-2 (64 aa).

4Fe-4S ferredoxin-type domains lie at 3–31 (KYLY…MSSA) and 34–64 (YAEV…WREE). 4 residues coordinate [4Fe-4S] cluster: Cys12, Cys15, Cys18, and Cys54.

Homodimer. The cofactor is [4Fe-4S] cluster.

Ferredoxins are iron-sulfur proteins that transfer electrons in a wide variety of metabolic reactions. The chain is Ferredoxin-2 from Nitratidesulfovibrio vulgaris (strain DSM 19637 / Miyazaki F) (Desulfovibrio vulgaris).